A 123-amino-acid polypeptide reads, in one-letter code: Small ribosomal subunit protein uS12cz/uS12cy (123 aa).

Belongs to the universal ribosomal protein uS12 family. As to quaternary structure, part of the 30S ribosomal subunit.

It localises to the plastid. The protein resides in the chloroplast. With S4 and S5 plays an important role in translational accuracy. Located at the interface of the 30S and 50S subunits. The sequence is that of Small ribosomal subunit protein uS12cz/uS12cy (rps12-A) from Drimys granadensis.